The sequence spans 150 residues: Aspartate carbamoyltransferase regulatory chain (150 aa).

4 residues coordinate Zn(2+): Cys105, Cys110, Cys133, and Cys136.

The protein belongs to the PyrI family. As to quaternary structure, contains catalytic and regulatory chains. Zn(2+) serves as cofactor.

Its function is as follows. Involved in allosteric regulation of aspartate carbamoyltransferase. The protein is Aspartate carbamoyltransferase regulatory chain of Thermococcus sibiricus (strain DSM 12597 / MM 739).